Consider the following 349-residue polypeptide: UDP-N-acetylenolpyruvoylglucosamine reductase (349 aa).

Residues 24–197 form the FAD-binding PCMH-type domain; that stretch reads FGIDATARFA…VAVTFRLPKR (174 aa). R173 is an active-site residue. S249 serves as the catalytic Proton donor. The active site involves E345.

The protein belongs to the MurB family. The cofactor is FAD.

It localises to the cytoplasm. The enzyme catalyses UDP-N-acetyl-alpha-D-muramate + NADP(+) = UDP-N-acetyl-3-O-(1-carboxyvinyl)-alpha-D-glucosamine + NADPH + H(+). It participates in cell wall biogenesis; peptidoglycan biosynthesis. Functionally, cell wall formation. This Burkholderia ambifaria (strain MC40-6) protein is UDP-N-acetylenolpyruvoylglucosamine reductase.